The primary structure comprises 395 residues: uncharacterized protein (395 aa).

This is an uncharacterized protein from Methanocaldococcus jannaschii (strain ATCC 43067 / DSM 2661 / JAL-1 / JCM 10045 / NBRC 100440) (Methanococcus jannaschii).